We begin with the raw amino-acid sequence, 228 residues long: MMQPVLELLGIDRTYHTAAGALQVLQGTDLRVSPGELVGLVGPSGSGKSTLLHTAGLLERPEGGSIFLDGIDCLKLNDNGRTSIRRRKIGFVYQFHHLLPEFNAIDNIAMPLMIAGVKKSKAREKASSLLEVMGLEERAYHQPGQLSGGEQQRVAIARALANDPKLVIADEPTGNLDPTTTERVFGTLIKMVREEGAGVLVATHNFALTRHMDRILTLKDGKLIDYVE.

Positions 6 to 227 (LELLGIDRTY…LKDGKLIDYV (222 aa)) constitute an ABC transporter domain. 42-49 (GPSGSGKS) contributes to the ATP binding site.

It belongs to the ABC transporter superfamily. Lipoprotein translocase (TC 3.A.1.125) family. The complex is composed of two ATP-binding proteins (LolD) and two transmembrane proteins (LolC and LolE).

It is found in the cell inner membrane. Part of the ABC transporter complex LolCDE involved in the translocation of mature outer membrane-directed lipoproteins, from the inner membrane to the periplasmic chaperone, LolA. Responsible for the formation of the LolA-lipoprotein complex in an ATP-dependent manner. This Hyphomonas neptunium (strain ATCC 15444) protein is Lipoprotein-releasing system ATP-binding protein LolD.